A 284-amino-acid chain; its full sequence is Cuticle collagen dpy-5 (284 aa).

The interval 88-284 is disordered; it reads GLPSQGCPAG…PCPERKRRRV (197 aa). Triple-helical region regions lie at residues 94 to 126 and 143 to 270; these read CPAGAPGNPGAPGEPGGTGPDGKNGPTGLPGLN and GPPG…VGAD. The segment covering 106 to 115 has biased composition (gly residues); sequence GEPGGTGPDG. Residues 163-177 show a composition bias toward basic and acidic residues; the sequence is AGKRGTPGKDGEPGR. 3 stretches are compositionally biased toward low complexity: residues 181-193, 224-246, and 255-271; these read IGDQGTPGQDGQP, EPGNNGNPGEEGQTGAQGPTGQP, and DGTPGQAGPQGAVGADA.

This sequence belongs to the cuticular collagen family. Collagen polypeptide chains are complexed within the cuticle by disulfide bonds and other types of covalent cross-links. In terms of processing, may be a substrate of bli-4.

In terms of biological role, nematode cuticles are composed largely of collagen-like proteins. The cuticle functions both as an exoskeleton and as a barrier to protect the worm from its environment. This chain is Cuticle collagen dpy-5 (dpy-5), found in Caenorhabditis elegans.